A 329-amino-acid polypeptide reads, in one-letter code: Ketol-acid reductoisomerase (NADP(+)) (329 aa).

In terms of domain architecture, KARI N-terminal Rossmann spans 2–182; sequence TQLFYDTDAD…GGTRAGILET (181 aa). NADP(+) contacts are provided by residues 25 to 28, Ser-51, Ser-53, and 83 to 86; these read YGSQ and DEFQ. His-108 is a catalytic residue. Residue Gly-134 coordinates NADP(+). Positions 183–328 constitute a KARI C-terminal knotted domain; it reads NFKEETETDL…KGLRSMFSWL (146 aa). Residues Asp-191, Glu-195, Glu-227, and Glu-231 each contribute to the Mg(2+) site. Ser-252 contributes to the substrate binding site.

Belongs to the ketol-acid reductoisomerase family. The cofactor is Mg(2+).

It catalyses the reaction (2R)-2,3-dihydroxy-3-methylbutanoate + NADP(+) = (2S)-2-acetolactate + NADPH + H(+). The enzyme catalyses (2R,3R)-2,3-dihydroxy-3-methylpentanoate + NADP(+) = (S)-2-ethyl-2-hydroxy-3-oxobutanoate + NADPH + H(+). It functions in the pathway amino-acid biosynthesis; L-isoleucine biosynthesis; L-isoleucine from 2-oxobutanoate: step 2/4. The protein operates within amino-acid biosynthesis; L-valine biosynthesis; L-valine from pyruvate: step 2/4. Its function is as follows. Involved in the biosynthesis of branched-chain amino acids (BCAA). Catalyzes an alkyl-migration followed by a ketol-acid reduction of (S)-2-acetolactate (S2AL) to yield (R)-2,3-dihydroxy-isovalerate. In the isomerase reaction, S2AL is rearranged via a Mg-dependent methyl migration to produce 3-hydroxy-3-methyl-2-ketobutyrate (HMKB). In the reductase reaction, this 2-ketoacid undergoes a metal-dependent reduction by NADPH to yield (R)-2,3-dihydroxy-isovalerate. This chain is Ketol-acid reductoisomerase (NADP(+)), found in Prochlorococcus marinus (strain MIT 9312).